Here is a 60-residue protein sequence, read N- to C-terminus: Large ribosomal subunit protein bL33 (60 aa).

It belongs to the bacterial ribosomal protein bL33 family.

The chain is Large ribosomal subunit protein bL33 from Chlorobaculum tepidum (strain ATCC 49652 / DSM 12025 / NBRC 103806 / TLS) (Chlorobium tepidum).